The primary structure comprises 110 residues: Insulin (110 aa).

Residues 1-23 (MALWLQAFTLLVLLVLSSPGAQS) form the signal peptide. 3 cysteine pairs are disulfide-bonded: C30/C96, C42/C109, and C95/C100. A propeptide spans 56-87 (DVDPLLGFLSPKSAQENEADEYPYKDQGDLKV) (c peptide).

Belongs to the insulin family. In terms of assembly, heterodimer of a B chain and an A chain linked by two disulfide bonds.

It is found in the secreted. In terms of biological role, insulin decreases blood glucose concentration. It increases cell permeability to monosaccharides, amino acids and fatty acids. It accelerates glycolysis, the pentose phosphate cycle, and glycogen synthesis in liver. The sequence is that of Insulin (ins) from Pantodon buchholzi (Freshwater butterflyfish).